The sequence spans 215 residues: 3-isopropylmalate dehydratase small subunit (215 aa).

Belongs to the LeuD family. LeuD type 1 subfamily. Heterodimer of LeuC and LeuD.

The enzyme catalyses (2R,3S)-3-isopropylmalate = (2S)-2-isopropylmalate. It functions in the pathway amino-acid biosynthesis; L-leucine biosynthesis; L-leucine from 3-methyl-2-oxobutanoate: step 2/4. Catalyzes the isomerization between 2-isopropylmalate and 3-isopropylmalate, via the formation of 2-isopropylmaleate. The protein is 3-isopropylmalate dehydratase small subunit of Xanthomonas campestris pv. campestris (strain 8004).